The primary structure comprises 213 residues: Small ribosomal subunit protein uS5 (213 aa).

The interval 1-42 (MSERDRNGGRSADNNRNDRNERGGRNDRGGRNDRRNNQQDER) is disordered. An S5 DRBM domain is found at 45 to 108 (YIERVVTINR…EEARKNFFRV (64 aa)).

Belongs to the universal ribosomal protein uS5 family. Part of the 30S ribosomal subunit. Contacts proteins S4 and S8.

In terms of biological role, with S4 and S12 plays an important role in translational accuracy. Located at the back of the 30S subunit body where it stabilizes the conformation of the head with respect to the body. In Corynebacterium urealyticum (strain ATCC 43042 / DSM 7109), this protein is Small ribosomal subunit protein uS5.